We begin with the raw amino-acid sequence, 358 residues long: Aminomethyltransferase (358 aa).

The protein belongs to the GcvT family. In terms of assembly, the glycine cleavage system is composed of four proteins: P, T, L and H.

It catalyses the reaction N(6)-[(R)-S(8)-aminomethyldihydrolipoyl]-L-lysyl-[protein] + (6S)-5,6,7,8-tetrahydrofolate = N(6)-[(R)-dihydrolipoyl]-L-lysyl-[protein] + (6R)-5,10-methylene-5,6,7,8-tetrahydrofolate + NH4(+). Its function is as follows. The glycine cleavage system catalyzes the degradation of glycine. The polypeptide is Aminomethyltransferase (Francisella tularensis subsp. tularensis (strain FSC 198)).